Here is a 440-residue protein sequence, read N- to C-terminus: Transposon TyH3 Gag polyprotein (440 aa).

3 stretches are compositionally biased toward polar residues: residues 1–23 (MESQ…SVTS), 48–60 (TKAN…TPAS), and 127–152 (QSQF…GNTF). Disordered stretches follow at residues 1-93 (MESQ…MMTQ), 126-173 (PQSQ…RPPP), and 352-440 (GSRN…PETY). Residues 153-165 (TDSSSADSDMTST) show a composition bias toward low complexity. The tract at residues 299–401 (NNGIHINNKV…NSKSKTARAH (103 aa)) is RNA-binding. Residues 402 to 418 (NVSTSNNSPSTDNDSIS) are compositionally biased toward low complexity. Ser416 is modified (phosphoserine). Positions 419-428 (KSTTEPIQLN) are enriched in polar residues. Residues 429-440 (NKHDLHLRPETY) are compositionally biased toward basic and acidic residues.

Homotrimer.

It is found in the cytoplasm. Functionally, capsid protein (CA) is the structural component of the virus-like particle (VLP), forming the shell that encapsulates the retrotransposons dimeric RNA genome. The particles are assembled from trimer-clustered units and there are holes in the capsid shells that allow for the diffusion of macromolecules. CA also has nucleocapsid-like chaperone activity, promoting primer tRNA(i)-Met annealing to the multipartite primer-binding site (PBS), dimerization of Ty1 RNA and initiation of reverse transcription. The polypeptide is Transposon TyH3 Gag polyprotein (TY1A) (Saccharomyces cerevisiae (Baker's yeast)).